The sequence spans 164 residues: B-phycoerythrin alpha chain (164 aa).

2 residues coordinate (2R,3E)-phycoerythrobilin: Cys82 and Cys139.

It belongs to the phycobiliprotein family. As to quaternary structure, heteromer of 6 alpha, 6 beta and one gamma chain. Post-translationally, contains two covalently linked bilin chromophores.

Its subcellular location is the plastid. The protein localises to the chloroplast thylakoid membrane. Light-harvesting photosynthetic bile pigment-protein from the phycobiliprotein complex. This chain is B-phycoerythrin alpha chain (cpeA), found in Porphyridium sordidum (Red alga).